The following is an 840-amino-acid chain: Phosphatidylglycerol lysyltransferase (840 aa).

Residues 1 to 8 (MTQELKSK) lie on the Cytoplasmic side of the membrane. Residues 9–29 (LLSFFKFIFATALFIFVIFTL) traverse the membrane as a helical segment. At 30–52 (YRELSHINFKETFIQFGKINRLW) the chain is on the extracellular side. Residues 53 to 73 (LVLLFAGGGLSLILLSLYDII) form a helical membrane-spanning segment. Topologically, residues 74–89 (LVKALKLKMPLIRVFR) are cytoplasmic. Residues 90 to 110 (VSYIINALNSIIGFGGFIGAG) form a helical membrane-spanning segment. The Extracellular segment spans residues 111-129 (VRAFVYKNYTNDTKKLVQY). The helical transmembrane segment at 130–150 (ISIILVSMLTGLSLLSILVVL) threads the bilayer. The Cytoplasmic segment spans residues 151–161 (RIFNASHMIDE). A helical transmembrane segment spans residues 162-182 (ISWVRWILYIVALFLPIFIFY). The Extracellular segment spans residues 183 to 200 (TVARPVDRNNRYMGVYCT). The helical transmembrane segment at 201-221 (VVSCVEWMAAATVLYFAALIV) threads the bilayer. Topologically, residues 222 to 229 (DIHISFMT) are cytoplasmic. Residues 230 to 250 (FVGIFVIAALSGLVSFIPGGF) form a helical membrane-spanning segment. Residues 251-270 (GAFDLVVLLGLKSLGISEEK) lie on the Extracellular side of the membrane. A helical transmembrane segment spans residues 271–291 (ILLALVLYRFAYYFVPVMIAL). At 292 to 337 (ILSSFEFGNTAKKYLDNSKYFIPVKDFTSFLRSYQKDILAKVPSFS) the chain is on the cytoplasmic side. The helical transmembrane segment at 338–358 (LAILIFLTSIIFFINNLTIVY) threads the bilayer. The Extracellular segment spans residues 359–366 (DGLYDGNH). Residues 367 to 387 (FAYYIALAVQTSACLLLILNV) form a helical membrane-spanning segment. The Cytoplasmic portion of the chain corresponds to 388–392 (RGIYK). A helical transmembrane segment spans residues 393-413 (GSRRAIIYAFISIILIASATI). The Extracellular portion of the chain corresponds to 414–415 (YT). Residues 416–436 (YASFLLLSWLIIIFVLLILAY) form a helical membrane-spanning segment. The Cytoplasmic segment spans residues 437 to 450 (QRAQVLKRPLRFKK). Residues 451 to 471 (LAVMLLLSIFILYLNHILISG) form a helical membrane-spanning segment. At 472–489 (TLYALDVYHIEIDTSLLR) the chain is on the extracellular side. A helical membrane pass occupies residues 490 to 510 (YYFWMTIVIIMLLVGVIAWLF). Topologically, residues 511-840 (DYKYKCPHHS…LKVMRVIRHK (330 aa)) are cytoplasmic.

The protein belongs to the LPG synthase family.

The protein resides in the cell membrane. The enzyme catalyses L-lysyl-tRNA(Lys) + a 1,2-diacyl-sn-glycero-3-phospho-(1'-sn-glycerol) = a 1,2-diacyl-sn-glycero-3-phospho-1'-(3'-O-L-lysyl)-sn-glycerol + tRNA(Lys). Catalyzes the transfer of a lysyl group from L-lysyl-tRNA(Lys) to membrane-bound phosphatidylglycerol (PG), which produces lysylphosphatidylglycerol (LPG), a major component of the bacterial membrane with a positive net charge. LPG synthesis contributes to bacterial virulence as it is involved in the resistance mechanism against cationic antimicrobial peptides (CAMP) produces by the host's immune system (defensins, cathelicidins) and by the competing microorganisms (bacteriocins). In fact, the modification of anionic phosphatidylglycerol with positively charged L-lysine results in repulsion of the peptides. The protein is Phosphatidylglycerol lysyltransferase (mprF) of Staphylococcus epidermidis (strain ATCC 12228 / FDA PCI 1200).